A 347-amino-acid polypeptide reads, in one-letter code: NADH-quinone oxidoreductase subunit H 1 (347 aa).

Helical transmembrane passes span 14–34 (IMIG…AYVL), 50–70 (PNVV…KFVF), 83–103 (IFLL…AVIP), 115–135 (VGIL…IMGG), 161–181 (IGFV…TDIV), 198–218 (FLDW…ISAL), 258–278 (AICL…LPPV), 286–306 (VPGI…FAMV), and 321–341 (LGWK…AFVL).

The protein belongs to the complex I subunit 1 family. As to quaternary structure, NDH-1 is composed of 14 different subunits. Subunits NuoA, H, J, K, L, M, N constitute the membrane sector of the complex.

It is found in the cell inner membrane. The enzyme catalyses a quinone + NADH + 5 H(+)(in) = a quinol + NAD(+) + 4 H(+)(out). Functionally, NDH-1 shuttles electrons from NADH, via FMN and iron-sulfur (Fe-S) centers, to quinones in the respiratory chain. The immediate electron acceptor for the enzyme in this species is believed to be ubiquinone. Couples the redox reaction to proton translocation (for every two electrons transferred, four hydrogen ions are translocated across the cytoplasmic membrane), and thus conserves the redox energy in a proton gradient. This subunit may bind ubiquinone. This chain is NADH-quinone oxidoreductase subunit H 1, found in Rhizobium meliloti (strain 1021) (Ensifer meliloti).